The following is a 425-amino-acid chain: TRAF family member-associated NF-kappa-B activator (425 aa).

At methionine 1 the chain carries N-acetylmethionine. The tract at residues 1-31 (MDKNIGEQLNKAYEAFRQACMDRDSAVKELQ) is necessary for interaction with ZC3H12A. Residues 22-62 (DRDSAVKELQQKTENYEQRIREQQEQLSLQQTIIDKLKSQL) adopt a coiled-coil conformation. Residues 70–191 (DNNYGCVPLL…QCTDKTDKQE (122 aa)) form a necessary for interaction with TRAF6 region. Residues serine 126 and serine 129 each carry the phosphoserine modification. The segment at 133–172 (HERGNIEKTFWDLKEEFHKICMLAKAQKDHLSKLNIPDTA) is interaction with TBK1 and IKBKE. Residues 172–191 (ATETQCSVPIQCTDKTDKQE) are TRAF family member interaction. Serine 178 and serine 208 each carry phosphoserine. The residue at position 213 (threonine 213) is a Phosphothreonine. 5 positions are modified to phosphoserine: serine 225, serine 228, serine 341, serine 354, and serine 357. The segment at 393–420 (PRVCEFCQAVFPPSITSRGDFLRHLNSH) adopts a UBZ1-type zinc-finger fold. Zn(2+) is bound by residues cysteine 396, cysteine 399, histidine 416, and histidine 420.

As to quaternary structure, homodimer. Found in a deubiquitination complex with TANK, USP10 and ZC3H12A; this complex inhibits genotoxic stress- or interleukin-1-beta-mediated NF-kappaB activation by promoting IKBKG or TRAF6 deubiquitination. Interacts with IKBKG; this interaction increases in response to DNA damage. Interacts with TRAF6; this interaction increases in response to DNA damage and recruits USP10 to the ubiquitinated TRAF6. Interacts with USP10; this interaction increases in response to DNA damage. Interacts with ZC3H12A; this interaction increases in response to DNA damage. Interacts with TBK1. Interacts with IKBKE. Also interacts with TRAF1, TRAF2, and TRAF3 by binding to their TRAF-C domains; the interaction with TRAF2 is disrupted by the phosphorylation of TANK by IKBKE. Interacts more strongly with TRAF1 and TRAF2 than TRAF3. Interacts with IKBKG; the interaction is enhanced by IKBKE and TBK1. Part of a ternary complex consisting of TANK, IKBKB and IKBKG. (Microbial infection) Interacts with vaccinia virus protein C6. In terms of assembly, (Microbial infection) Interacts with Seneca Valley virus protease 3C; this interaction allows the cleavage of TANK and subsequent suppression of host innate immunity. In terms of processing, phosphorylated by IKBKE. (Microbial infection) Cleaved by encephalomyocarditis virus (EMCV) protease 3C. This cleavage allows the virus to disrupt the TANK-TBK1-IKKepsilon-IRF3 complex, thereby inhibiting the induction of the IFN-beta signal pathway. Post-translationally, (Microbial infection) Cleaved by Seneca Valley virus protease 3C allowing the virus to suppress interferon type-I through both RIG-I and Toll-like receptor-dependent pathways. As to expression, ubiquitous.

Its subcellular location is the cytoplasm. Its function is as follows. Adapter protein involved in I-kappa-B-kinase (IKK) regulation which constitutively binds TBK1 and IKBKE playing a role in antiviral innate immunity. Acts as a regulator of TRAF function by maintaining them in a latent state. Blocks TRAF2 binding to LMP1 and inhibits LMP1-mediated NF-kappa-B activation. Negatively regulates NF-kappaB signaling and cell survival upon DNA damage. Plays a role as an adapter to assemble ZC3H12A, USP10 in a deubiquitination complex which plays a negative feedback response to attenuate NF-kappaB activation through the deubiquitination of IKBKG or TRAF6 in response to interleukin-1-beta (IL1B) stimulation or upon DNA damage. Promotes UBP10-induced deubiquitination of TRAF6 in response to DNA damage. May control negatively TRAF2-mediated NF-kappa-B activation signaled by CD40, TNFR1 and TNFR2. The sequence is that of TRAF family member-associated NF-kappa-B activator (TANK) from Homo sapiens (Human).